Reading from the N-terminus, the 251-residue chain is Probable transcriptional regulatory protein AAur_2300 (251 aa).

It belongs to the TACO1 family.

The protein resides in the cytoplasm. The polypeptide is Probable transcriptional regulatory protein AAur_2300 (Paenarthrobacter aurescens (strain TC1)).